The sequence spans 536 residues: Keratin, type II cytoskeletal 4 (536 aa).

A head region spans residues 1-145 (MISRQSSVRG…DPEIQKIRTA (145 aa)). R13 bears the Omega-N-methylarginine mark. Residues 146 to 181 (EREQIKTLNNKFASFIDKVRFLEQQNKVLETKWNLL) are coil 1A. Residues 146-457 (EREQIKTLNN…KLLEGEECRM (312 aa)) form the IF rod domain. The linker 1 stretch occupies residues 182-200 (QQQTTTTSPRNLDPFFETY). The segment at 201–293 (INALRKNLDT…LYEAELSQMQ (93 aa)) is coil 1B. A linker 12 region spans residues 294 to 316 (THVSDTSVVLSMDNNRNLDLDGI). Positions 317 to 454 (IAEVRAQYEE…TYRKLLEGEE (138 aa)) are coil 2. The tract at residues 455 to 524 (CRMSGECKSA…TSSATITKRS (70 aa)) is tail. The segment at 515 to 536 (TSSATITKRSPRTRQDPDGLQP) is disordered. Residues 527-536 (TRQDPDGLQP) are compositionally biased toward basic and acidic residues.

This sequence belongs to the intermediate filament family. Heterotetramer of two type I and two type II keratins. keratin-4 is generally associated with keratin-13.

The sequence is that of Keratin, type II cytoskeletal 4 from Rattus norvegicus (Rat).